Here is a 231-residue protein sequence, read N- to C-terminus: Large ribosomal subunit protein uL1 (231 aa).

It belongs to the universal ribosomal protein uL1 family. Part of the 50S ribosomal subunit.

Binds directly to 23S rRNA. The L1 stalk is quite mobile in the ribosome, and is involved in E site tRNA release. In terms of biological role, protein L1 is also a translational repressor protein, it controls the translation of the L11 operon by binding to its mRNA. The sequence is that of Large ribosomal subunit protein uL1 from Ralstonia nicotianae (strain ATCC BAA-1114 / GMI1000) (Ralstonia solanacearum).